A 251-amino-acid chain; its full sequence is Putative mediator of RNA polymerase II transcription subunit 18 (251 aa).

The protein belongs to the Mediator complex subunit 18 family. In terms of assembly, component of the Mediator complex.

It is found in the nucleus. In terms of biological role, component of the Mediator complex, a coactivator involved in the regulated transcription of nearly all RNA polymerase II-dependent genes. Mediator functions as a bridge to convey information from gene-specific regulatory proteins to the basal RNA polymerase II transcription machinery. Mediator is recruited to promoters by direct interactions with regulatory proteins and serves as a scaffold for the assembly of a functional preinitiation complex with RNA polymerase II and the general transcription factors. The polypeptide is Putative mediator of RNA polymerase II transcription subunit 18 (med18) (Dictyostelium discoideum (Social amoeba)).